A 403-amino-acid polypeptide reads, in one-letter code: GPI-N-acetylgalactosamine transferase PGAP4 (403 aa).

The Cytoplasmic portion of the chain corresponds to 1-22 (MSTSTSPAAMLLRRLRRLSWGS). Residues 23-43 (TAVQLFILTVVTFGLLAPLAC) traverse the membrane as a helical segment. The Lumenal segment spans residues 44–259 (HRLLHSYFYL…RLQHYINPEP (216 aa)). The N-linked (GalNAc...) asparagine glycan is linked to Asn87. UDP-N-acetyl-alpha-D-galactosamine is bound at residue Val109. Intrachain disulfides connect Cys132-Cys136 and Cys144-Cys194. Residues 211-213 (EDD) carry the DXD motif motif. A helical transmembrane segment spans residues 260–280 (MRILEWVGVGMLLGPLLTWIY). Residues 281–287 (MRFASRP) are Cytoplasmic-facing. Residues 288–308 (GFSWPVMLFFSLYSMGLVELV) form a helical membrane-spanning segment. Residues 309–403 (GRHYFLELRR…LRYNFHPSLL (95 aa)) lie on the Lumenal side of the membrane. A disulfide bridge links Cys332 with Cys333. UDP-N-acetyl-alpha-D-galactosamine contacts are provided by Thr334, Pro335, and Lys362.

It belongs to the PGAP4 family. Post-translationally, glycosylated.

It localises to the golgi apparatus membrane. In terms of biological role, golgi-resident glycosylphosphatidylinositol (GPI)-N-acetylgalactosamine transferase that catalyzes the N-acetyl-beta-D-galactosamine transfer from an UDP-N-acetyl-alpha-D-galactosamine to the 4-OH-position of the first mannose of the glycosylphosphatidylinositol (GPI) of a GPI-anchored protein (GPI-AP). This modification occurs after the fatty acid remodeling step of the GPI-anchor maturation. This chain is GPI-N-acetylgalactosamine transferase PGAP4, found in Homo sapiens (Human).